The chain runs to 90 residues: MVKNSFISVIFQEKKEENRGSAEFQIVSFTNKIRRLTSHLELHKKDYLSQRGLRKILGKRQRLLSYLSKTNKIRYKELIGELDIRESKNR.

This sequence belongs to the universal ribosomal protein uS15 family. In terms of assembly, part of the 30S ribosomal subunit.

The protein localises to the plastid. Its subcellular location is the chloroplast. The protein is Small ribosomal subunit protein uS15c (rps15) of Gossypium barbadense (Sea Island cotton).